We begin with the raw amino-acid sequence, 180 residues long: Nucleoside-triphosphatase THEP1 (180 aa).

ATP contacts are provided by residues 18 to 25 (GRPGVGKT) and 104 to 111 (LVIMDEIG).

Belongs to the THEP1 NTPase family.

It catalyses the reaction a ribonucleoside 5'-triphosphate + H2O = a ribonucleoside 5'-diphosphate + phosphate + H(+). In terms of biological role, has nucleotide phosphatase activity towards ATP, GTP, CTP, TTP and UTP. May hydrolyze nucleoside diphosphates with lower efficiency. The sequence is that of Nucleoside-triphosphatase THEP1 from Metallosphaera sedula (strain ATCC 51363 / DSM 5348 / JCM 9185 / NBRC 15509 / TH2).